A 234-amino-acid chain; its full sequence is tRNA1(Val) (adenine(37)-N6)-methyltransferase (234 aa).

This sequence belongs to the methyltransferase superfamily. tRNA (adenine-N(6)-)-methyltransferase family.

The protein localises to the cytoplasm. It catalyses the reaction adenosine(37) in tRNA1(Val) + S-adenosyl-L-methionine = N(6)-methyladenosine(37) in tRNA1(Val) + S-adenosyl-L-homocysteine + H(+). Functionally, specifically methylates the adenine in position 37 of tRNA(1)(Val) (anticodon cmo5UAC). This Aliivibrio fischeri (strain ATCC 700601 / ES114) (Vibrio fischeri) protein is tRNA1(Val) (adenine(37)-N6)-methyltransferase.